The sequence spans 708 residues: Leukotoxin translocation ATP-binding protein LktB (708 aa).

The region spanning 1–126 (MEVNHQSNDL…SCYQGKIILV (126 aa)) is the Peptidase C39 domain. An ABC transmembrane type-1 domain is found at 155–437 (FLETLLVSIF…LAQLWQDFTQ (283 aa)). The next 5 helical transmembrane spans lie at 159 to 179 (LLVS…FQVV), 192 to 212 (LNII…LSGL), 270 to 290 (ALTS…MWYY), 296 to 316 (LVIL…SPIL), and 389 to 409 (VMVI…LSIG). In terms of domain architecture, ABC transporter spans 469–704 (IAFKNIRFRY…NNGLYSYLHQ (236 aa)). An ATP-binding site is contributed by 503 to 510 (GRSGSGKS).

It belongs to the ABC transporter superfamily. Protein-1 exporter (TC 3.A.1.109) family. Homodimer.

It is found in the cell inner membrane. It catalyses the reaction ATP + H2O + proteinSide 1 = ADP + phosphate + proteinSide 2.. Its function is as follows. Part of the ABC transporter complex LktBD involved in leukotoxin export. Transmembrane domains (TMD) form a pore in the inner membrane and the ATP-binding domain (NBD) is responsible for energy generation. This Pasteurella haemolytica-like sp. (strain 5943B) protein is Leukotoxin translocation ATP-binding protein LktB (lktB).